Here is a 1526-residue protein sequence, read N- to C-terminus: DNA topoisomerase 2-alpha (1526 aa).

N-acetylmethionine is present on Met-1. A disordered region spans residues Met-1–Glu-21. Ser-4 is modified (phosphoserine). A Glycyl lysine isopeptide (Lys-Gly) (interchain with G-Cter in SUMO2) cross-link involves residue Lys-17. ATP is bound by residues Asn-90, Asn-119, and Ser-147–Asn-149. Residues Lys-155 and Lys-156 each participate in a glycyl lysine isopeptide (Lys-Gly) (interchain with G-Cter in SUMO2) cross-link. An ATP-binding site is contributed by Gly-160–Lys-167. Residue Lys-260 forms a Glycyl lysine isopeptide (Lys-Gly) (interchain with G-Cter in SUMO2) linkage. A Phosphothreonine modification is found at Thr-281. Residues Lys-341–Lys-343 are interaction with DNA. Residue Lys-351 forms a Glycyl lysine isopeptide (Lys-Gly) (interchain with G-Cter in SUMO2) linkage. An ATP-binding site is contributed by Gln-375 to Lys-377. Glycyl lysine isopeptide (Lys-Gly) (interchain with G-Cter in SUMO2) cross-links involve residues Lys-385, Lys-396, Lys-415, Lys-417, Lys-424, and Lys-439. Positions Cys-454–Glu-571 constitute a Toprim domain. Glu-460 contributes to the Mg(2+) binding site. Glycyl lysine isopeptide (Lys-Gly) (interchain with G-Cter in SUMO2) cross-links involve residues Lys-465, Lys-479, and Lys-528. Mg(2+)-binding residues include Asp-540 and Asp-542. Residues Lys-583, Lys-598, Lys-613, Lys-621, Lys-624, Lys-631, Lys-638, Lys-654, Lys-661, and Lys-675 each participate in a glycyl lysine isopeptide (Lys-Gly) (interchain with G-Cter in SUMO2) cross-link. A Topo IIA-type catalytic domain is found at Ile-714–Leu-1166. Tyr-804 serves as the catalytic O-(5'-phospho-DNA)-tyrosine intermediate. The interval Lys-989–Ser-998 is interaction with DNA. Lys-1074 is covalently cross-linked (Glycyl lysine isopeptide (Lys-Gly) (interchain with G-Cter in SUMO2)). Disordered stretches follow at residues Trp-1089 to Gly-1117 and Glu-1180 to Gln-1217. A compositionally biased stretch (acidic residues) spans Asp-1098–Asn-1109. Ser-1105 carries the post-translational modification Phosphoserine; by CK1. Glycyl lysine isopeptide (Lys-Gly) (interchain with G-Cter in SUMO2) cross-links involve residues Lys-1191 and Lys-1199. At Ser-1208 the chain carries Phosphoserine. Lys-1223 is covalently cross-linked (Glycyl lysine isopeptide (Lys-Gly) (interchain with G-Cter in SUMO2)). The interval Lys-1233–Phe-1526 is disordered. Lys-1235 is covalently cross-linked (Glycyl lysine isopeptide (Lys-Gly) (interchain with G-Cter in SUMO1); alternate). Lys-1235 participates in a covalent cross-link: Glycyl lysine isopeptide (Lys-Gly) (interchain with G-Cter in SUMO2); alternate. The residue at position 1242 (Thr-1242) is a Phosphothreonine. Lys-1254 participates in a covalent cross-link: Glycyl lysine isopeptide (Lys-Gly) (interchain with G-Cter in SUMO2). A compositionally biased stretch (basic and acidic residues) spans Gln-1255–Pro-1265. Glycyl lysine isopeptide (Lys-Gly) (interchain with G-Cter in SUMO2) cross-links involve residues Lys-1271, Lys-1278, and Lys-1281. Ser-1290, Ser-1292, Ser-1294, and Ser-1297 each carry phosphoserine. Phosphothreonine is present on Thr-1322. The span at Leu-1325–Phe-1344 shows a compositional bias: acidic residues. 2 positions are modified to phosphoserine: Ser-1327 and Ser-1332. Position 1349 is a phosphothreonine (Thr-1349). Residues Lys-1358, Lys-1362, and Lys-1368 each participate in a glycyl lysine isopeptide (Lys-Gly) (interchain with G-Cter in SUMO2) cross-link. 2 positions are modified to phosphoserine: Ser-1369 and Ser-1372. Residue Lys-1380 forms a Glycyl lysine isopeptide (Lys-Gly) (interchain with G-Cter in SUMO2) linkage. Phosphoserine occurs at positions 1382 and 1386. A compositionally biased stretch (low complexity) spans Ser-1405–Gly-1426. Residue Lys-1417 forms a Glycyl lysine isopeptide (Lys-Gly) (interchain with G-Cter in SUMO2); alternate linkage. Lys-1417 bears the N6-acetyllysine; alternate mark. The interval Lys-1428–Lys-1434 is interaction with PLSCR1. Lys-1437 participates in a covalent cross-link: Glycyl lysine isopeptide (Lys-Gly) (interchain with G-Cter in SUMO2); alternate. At Lys-1437 the chain carries N6-acetyllysine; alternate. Glycyl lysine isopeptide (Lys-Gly) (interchain with G-Cter in SUMO2) cross-links involve residues Lys-1449 and Lys-1454. Residues Ser-1464, Ser-1466, Ser-1469, and Ser-1471 each carry the phosphoserine modification. Glycyl lysine isopeptide (Lys-Gly) (interchain with G-Cter in SUMO2) cross-links involve residues Lys-1479 and Lys-1487. Positions Ser-1486–Leu-1497 are enriched in basic and acidic residues. The residue at position 1520 (Ser-1520) is a Phosphoserine.

Belongs to the type II topoisomerase family. In terms of assembly, homodimer. Interacts with COPS5. Interacts with RECQL5; this stimulates DNA decatenation. Interacts with SETMAR; stimulates the topoisomerase activity. Interacts with DHX9; this interaction occurs in a E2 enzyme UBE2I- and RNA-dependent manner, negatively regulates DHX9-mediated double-stranded DNA and RNA duplex helicase activity and stimulates TOP2A-mediated supercoiled DNA relaxation activity. Interacts with HNRNPU (via C-terminus); this interaction protects the topoisomerase TOP2A from degradation and positively regulates the relaxation of supercoiled DNA in a RNA-dependent manner. Interacts with MCM3AP. Interacts with ERCC6. Interacts with PLSCR1. Interacts with GCNA; this interaction allows the resolution of topoisomerase II (TOP2A) DNA-protein cross-links. Interacts with POL1RA/RPA1 (via dock II) and UBTF in the context of Pol I complex; may assist Pol I transcription initiation by releasing supercoils occurring during DNA unwinding. Interacts with TPRN; TPRN interacts with a number of DNA damage response proteins, is recruited to sites of DNA damage and may play a role in DNA damage repair. Requires Mg(2+) as cofactor. The cofactor is Mn(2+). It depends on Ca(2+) as a cofactor. In terms of processing, phosphorylation has no effect on catalytic activity. However, phosphorylation at Ser-1105 by CSNK1D/CK1 promotes DNA cleavable complex formation.

The protein localises to the cytoplasm. It is found in the nucleus. The protein resides in the nucleoplasm. Its subcellular location is the nucleolus. The catalysed reaction is ATP-dependent breakage, passage and rejoining of double-stranded DNA.. Key decatenating enzyme that alters DNA topology by binding to two double-stranded DNA molecules, generating a double-stranded break in one of the strands, passing the intact strand through the broken strand, and religating the broken strand. May play a role in regulating the period length of BMAL1 transcriptional oscillation. The chain is DNA topoisomerase 2-alpha (TOP2A) from Cricetulus griseus (Chinese hamster).